A 366-amino-acid chain; its full sequence is tRNA 2-selenouridine synthase (366 aa).

The Rhodanese domain maps to 12-135 (FLNDVPMMDA…MRTFLLDTLH (124 aa)). Residue cysteine 95 is the S-selanylcysteine intermediate of the active site.

This sequence belongs to the SelU family. Monomer.

It catalyses the reaction 5-methylaminomethyl-2-thiouridine(34) in tRNA + selenophosphate + (2E)-geranyl diphosphate + H2O + H(+) = 5-methylaminomethyl-2-selenouridine(34) in tRNA + (2E)-thiogeraniol + phosphate + diphosphate. The enzyme catalyses 5-methylaminomethyl-2-thiouridine(34) in tRNA + (2E)-geranyl diphosphate = 5-methylaminomethyl-S-(2E)-geranyl-thiouridine(34) in tRNA + diphosphate. It carries out the reaction 5-methylaminomethyl-S-(2E)-geranyl-thiouridine(34) in tRNA + selenophosphate + H(+) = 5-methylaminomethyl-2-(Se-phospho)selenouridine(34) in tRNA + (2E)-thiogeraniol. The catalysed reaction is 5-methylaminomethyl-2-(Se-phospho)selenouridine(34) in tRNA + H2O = 5-methylaminomethyl-2-selenouridine(34) in tRNA + phosphate. Functionally, involved in the post-transcriptional modification of the uridine at the wobble position (U34) of tRNA(Lys), tRNA(Glu) and tRNA(Gln). Catalyzes the conversion of 2-thiouridine (S2U-RNA) to 2-selenouridine (Se2U-RNA). Acts in a two-step process involving geranylation of 2-thiouridine (S2U) to S-geranyl-2-thiouridine (geS2U) and subsequent selenation of the latter derivative to 2-selenouridine (Se2U) in the tRNA chain. This is tRNA 2-selenouridine synthase from Pseudomonas syringae pv. tomato (strain ATCC BAA-871 / DC3000).